A 397-amino-acid polypeptide reads, in one-letter code: Acetate kinase (397 aa).

Asn8 lines the Mg(2+) pocket. Lys15 lines the ATP pocket. Arg89 provides a ligand contact to substrate. The active-site Proton donor/acceptor is the Asp146. Residues His206–Gly210, Asp281–Arg283, and Gly329–Asn333 each bind ATP. Glu382 provides a ligand contact to Mg(2+).

It belongs to the acetokinase family. Homodimer. Mg(2+) serves as cofactor. Mn(2+) is required as a cofactor.

It localises to the cytoplasm. The enzyme catalyses acetate + ATP = acetyl phosphate + ADP. It participates in metabolic intermediate biosynthesis; acetyl-CoA biosynthesis; acetyl-CoA from acetate: step 1/2. In terms of biological role, catalyzes the formation of acetyl phosphate from acetate and ATP. Can also catalyze the reverse reaction. The protein is Acetate kinase of Bacillus cereus (strain ATCC 14579 / DSM 31 / CCUG 7414 / JCM 2152 / NBRC 15305 / NCIMB 9373 / NCTC 2599 / NRRL B-3711).